We begin with the raw amino-acid sequence, 617 residues long: Cytoplasmic polyadenylation element-binding protein 1 (617 aa).

Positions 1–38 (MQSQLKACGDAPAPSCSLHHRRTISKKPSNGGNSGGGG) are disordered. 2 consecutive RRM domains span residues 273–377 (RKVF…AWRL) and 394–465 (RTVF…HADT). Disordered stretches follow at residues 534 to 568 (DQTRILPRPPHHSTSHYHHRSTPSHHHNHTHQNVT) and 592 to 617 (NQNNNSANSTPPQMKQFSAIPTAIGY). A compositionally biased stretch (basic residues) spans 542–563 (PPHHSTSHYHHRSTPSHHHNHT).

Interacts with fbf-1.

Cytoplasmic polyadenylation element binding protein that binds to and regulates the translation of specific mRNAs. Essential for progression through meiosis. Involved in spermatogenesis. This is Cytoplasmic polyadenylation element-binding protein 1 (cpb-1) from Caenorhabditis japonica.